The following is a 246-amino-acid chain: Ribonuclease 3 (246 aa).

The RNase III domain occupies 18-147; the sequence is FKELQKKIGI…FIGALYLDQG (130 aa). Mg(2+) is bound at residue E60. Residue D64 is part of the active site. Residues D133 and E136 each contribute to the Mg(2+) site. The active site involves E136. The DRBM domain maps to 173 to 242; the sequence is DFKSQLQELV…AQMALQKLKT (70 aa).

This sequence belongs to the ribonuclease III family. In terms of assembly, homodimer. It depends on Mg(2+) as a cofactor.

The protein localises to the cytoplasm. The catalysed reaction is Endonucleolytic cleavage to 5'-phosphomonoester.. Functionally, digests double-stranded RNA. Involved in the processing of primary rRNA transcript to yield the immediate precursors to the large and small rRNAs (23S and 16S). Processes some mRNAs, and tRNAs when they are encoded in the rRNA operon. Processes pre-crRNA and tracrRNA of type II CRISPR loci if present in the organism. The protein is Ribonuclease 3 of Geobacillus sp. (strain WCH70).